A 251-amino-acid chain; its full sequence is HTH-type transcriptional regulator UlaR (251 aa).

The HTH deoR-type domain maps to 3–58 (EAQRHQILLEMLAQLGFVTVEKVVERLGISPATARRDINKLDESGKLKKVRNGAEA). The segment at residues 20-39 (VTVEKVVERLGISPATARRD) is a DNA-binding region (H-T-H motif).

It localises to the cytoplasm. Its function is as follows. Represses ulaG and the ulaABCDEF operon. This Escherichia coli (strain SMS-3-5 / SECEC) protein is HTH-type transcriptional regulator UlaR.